A 74-amino-acid chain; its full sequence is ATP synthase subunit 9, mitochondrial (74 aa).

Transmembrane regions (helical) follow at residues 8–28 and 50–70; these read IGAG…GLIF and ILGF…AFLI.

The protein belongs to the ATPase C chain family. In terms of assembly, F-type ATPases have 2 components, CF(1) - the catalytic core - and CF(0) - the membrane proton channel. CF(1) has five subunits: alpha(3), beta(3), gamma(1), delta(1), epsilon(1). CF(0) has three main subunits: a, b and c.

The protein resides in the mitochondrion membrane. Mitochondrial membrane ATP synthase (F(1)F(0) ATP synthase or Complex V) produces ATP from ADP in the presence of a proton gradient across the membrane which is generated by electron transport complexes of the respiratory chain. F-type ATPases consist of two structural domains, F(1) - containing the extramembraneous catalytic core and F(0) - containing the membrane proton channel, linked together by a central stalk and a peripheral stalk. During catalysis, ATP synthesis in the catalytic domain of F(1) is coupled via a rotary mechanism of the central stalk subunits to proton translocation. Part of the complex F(0) domain. A homomeric c-ring of probably 10 subunits is part of the complex rotary element. The protein is ATP synthase subunit 9, mitochondrial (atp9) of Schizosaccharomyces pombe (strain 972 / ATCC 24843) (Fission yeast).